The sequence spans 401 residues: Anhydro-N-acetylmuramic acid kinase (401 aa).

25 to 32 (GTSLDGLD) contacts ATP.

Belongs to the anhydro-N-acetylmuramic acid kinase family.

The enzyme catalyses 1,6-anhydro-N-acetyl-beta-muramate + ATP + H2O = N-acetyl-D-muramate 6-phosphate + ADP + H(+). The protein operates within amino-sugar metabolism; 1,6-anhydro-N-acetylmuramate degradation. It participates in cell wall biogenesis; peptidoglycan recycling. Its function is as follows. Catalyzes the specific phosphorylation of 1,6-anhydro-N-acetylmuramic acid (anhMurNAc) with the simultaneous cleavage of the 1,6-anhydro ring, generating MurNAc-6-P. Is required for the utilization of anhMurNAc either imported from the medium or derived from its own cell wall murein, and thus plays a role in cell wall recycling. The chain is Anhydro-N-acetylmuramic acid kinase from Pseudoalteromonas atlantica (strain T6c / ATCC BAA-1087).